The chain runs to 212 residues: Uridine kinase (212 aa).

13–20 (GGSGSGKT) serves as a coordination point for ATP.

This sequence belongs to the uridine kinase family.

The protein resides in the cytoplasm. It carries out the reaction uridine + ATP = UMP + ADP + H(+). The catalysed reaction is cytidine + ATP = CMP + ADP + H(+). It participates in pyrimidine metabolism; CTP biosynthesis via salvage pathway; CTP from cytidine: step 1/3. The protein operates within pyrimidine metabolism; UMP biosynthesis via salvage pathway; UMP from uridine: step 1/1. The sequence is that of Uridine kinase from Bacillus cereus (strain ATCC 10987 / NRS 248).